A 541-amino-acid chain; its full sequence is 3-oxoacyl-[acyl-carrier-protein] synthase II, chloroplastic (541 aa).

A chloroplast-targeting transit peptide spans 1–103 (MVGASSSYAS…NRNQRRLNRA (103 aa)). The Ketosynthase family 3 (KS3) domain maps to 129–539 (QRRVVVTGMG…GHNSSIIFAP (411 aa)). Active-site for beta-ketoacyl synthase activity residues include cysteine 292, histidine 432, and histidine 468.

Belongs to the thiolase-like superfamily. Beta-ketoacyl-ACP synthases family. As to quaternary structure, homodimer. As to expression, mostly expressed in siliques, and, to a lower extent, in leaves, stems, flower buds, and flowers.

The protein localises to the plastid. Its subcellular location is the chloroplast stroma. It catalyses the reaction a fatty acyl-[ACP] + malonyl-[ACP] + H(+) = a 3-oxoacyl-[ACP] + holo-[ACP] + CO2. Functionally, essential protein that catalyzes the condensation reaction of fatty acid synthesis by the addition to an acyl acceptor of two carbons from malonyl-ACP. Specific for elongation from C-16 and C-16 to unsaturated C-18 fatty acids. Confers resistance to low temperatures by maintaining chloroplast membranes integrity. Involved in the regulation of fatty acids ratios during seed metabolism. Required for embryo development, especially at the transition from the globular to the heart stage. This chain is 3-oxoacyl-[acyl-carrier-protein] synthase II, chloroplastic (KAS2), found in Arabidopsis thaliana (Mouse-ear cress).